We begin with the raw amino-acid sequence, 1358 residues long: Tenascin-R (1358 aa).

Residues 1–31 form the signal peptide; it reads MGIDGETVVLKNMLIGVNLILLGSMLKPSEC. The segment at 37-58 is disordered; the sequence is TERAQRQTVEEEGGASSYNTSS. N-linked (GlcNAc...) asparagine glycosylation is present at Asn55. Residues 127–157 are a coiled coil; that stretch reads CASSSQVLQELLSRIEMLEREVSLLRDQCNT. O-linked (Xyl...) (chondroitin sulfate) serine glycosylation occurs at Ser176. Asn180 and Asn198 each carry an N-linked (GlcNAc...) asparagine glycan. EGF-like domains are found at residues 188-199, 219-230, and 250-261; these read CICNEGWFGKNC, CICDSEYSGDDC, and CVCEEPYTGEDC. Residue Ser271 is glycosylated (O-linked (Xyl...) (chondroitin sulfate) serine). Asn278 is a glycosylation site (N-linked (GlcNAc...) asparagine). Residues 281–292 enclose the EGF-like 4 domain; the sequence is CLCQEGYAGEDC. 2 disulfide bridges follow: Cys297/Cys307 and Cys314/Cys323. An O-linked (Xyl...) (chondroitin sulfate) serine glycan is attached at Ser302. The EGF-like 5 domain maps to 312 to 323; the sequence is CICEEGYQGPDC. Fibronectin type-III domains are found at residues 328 to 420, 421 to 505, 506 to 597, 598 to 687, 688 to 777, 778 to 865, 866 to 955, 956 to 1042, and 1043 to 1131; these read PPED…TPQG, LQFK…TVID, GPTQ…IDAP, KNLR…TELD, SPRD…FRPI, SHLH…TGID, PPKN…AMDS, PMDL…TLLD, and PPDN…GGRV. N-linked (GlcNAc...) asparagine glycosylation is found at Asn392, Asn470, and Asn581. Ser724 is subject to Phosphoserine. 6 N-linked (GlcNAc...) asparagine glycosylation sites follow: Asn791, Asn869, Asn874, Asn1036, Asn1046, and Asn1261. Positions 1129 to 1344 constitute a Fibrinogen C-terminal domain; it reads GRVFSHPQDC…FVEMKMRPYI (216 aa).

The protein belongs to the tenascin family. In terms of assembly, interacts with BCAN and ACAN in a calcium-dependent manner. Interacts with SCN2B, PTPRZ1, and CSPG3. Forms oligomers. Isoforms 1 and 2 form respectively trimeric (tribrachion) and dimeric kink-armed rodlike structures, which are linked by disulfide bridges. Interacts with CNTN1, TNC and FN1. In terms of processing, contains N-linked oligosaccharides with a sulfated carbohydrate structures. Contains N-linked oligosaccharides, O-linked sialylated structures and O-linked chondroitin sulfate glycosaminoglycans. Brain-specific.

The protein localises to the secreted. It is found in the extracellular space. It localises to the extracellular matrix. Its function is as follows. Neural extracellular matrix (ECM) protein involved in interactions with different cells and matrix components. Theses interactions can influence cellular behavior by either evoking a stable adhesion and differentiation, or repulsion and inhibition of neurite growth. Binding to cell surface gangliosides inhibits RGD-dependent integrin-mediated cell adhesion and results in an inhibition of PTK2/FAK1 (FAK) phosphorylation and cell detachment. Binding to membrane surface sulfatides results in a oligodendrocyte adhesion and differentiation. Interaction with CNTN1 induces a repulsion of neurons and an inhibition of neurite outgrowth. Interacts with SCN2B may play a crucial role in clustering and regulation of activity of sodium channels at nodes of Ranvier. TNR-linked chondroitin sulfate glycosaminoglycans are involved in the interaction with FN1 and mediates inhibition of cell adhesion and neurite outgrowth. The highly regulated addition of sulfated carbohydrate structure may modulate the adhesive properties of TNR over the course of development and during synapse maintenance. The chain is Tenascin-R (Tnr) from Mus musculus (Mouse).